The sequence spans 241 residues: Large ribosomal subunit protein uL3 (241 aa).

Disordered regions lie at residues 139-166 and 214-241; these read VSHRSIGSTGGRQDPGKTFKNKKMPGHM and ADAPKPGKFRLANGDAAAEAPAAEQEGA. Glutamine 151 bears the N5-methylglutamine mark. Residues 229–241 are compositionally biased toward low complexity; sequence AAAEAPAAEQEGA.

In terms of assembly, part of the 50S ribosomal subunit. Forms a cluster with proteins L14 and L19. In terms of processing, methylated, on either Lys-155 or Lys-158. Methylated by PrmB.

Functionally, one of the primary rRNA binding proteins, it binds directly near the 3'-end of the 23S rRNA, where it nucleates assembly of the 50S subunit. This is Large ribosomal subunit protein uL3 from Rhodopseudomonas palustris (strain ATCC BAA-98 / CGA009).